We begin with the raw amino-acid sequence, 211 residues long: Large ribosomal subunit protein bL25 (211 aa).

Positions 175 to 211 (VSEPVEQDLGEESETEEEGAEGEKPAESTGEEPGDDE) are disordered. Residues 179–194 (VEQDLGEESETEEEGA) show a composition bias toward acidic residues.

Belongs to the bacterial ribosomal protein bL25 family. CTC subfamily. In terms of assembly, part of the 50S ribosomal subunit; part of the 5S rRNA/L5/L18/L25 subcomplex. Contacts the 5S rRNA. Binds to the 5S rRNA independently of L5 and L18.

In terms of biological role, this is one of the proteins that binds to the 5S RNA in the ribosome where it forms part of the central protuberance. The protein is Large ribosomal subunit protein bL25 of Kocuria rhizophila (strain ATCC 9341 / DSM 348 / NBRC 103217 / DC2201).